A 149-amino-acid polypeptide reads, in one-letter code: Inner membrane protein YidI (149 aa).

Over 1 to 8 the chain is Cytoplasmic; that stretch reads MGIIAQNK. The helical transmembrane segment at 9–31 threads the bilayer; the sequence is ISSLGMLFGAIALMMGIIHFSFG. The Periplasmic segment spans residues 32–77; that stretch reads PFSAPPPTFESIVADKTAEIKRGLLAGIKGEKITTVEKKEDVDVDK. The chain crosses the membrane as a helical span at residues 78 to 97; the sequence is ILNQSGIALAIAALLCAFIG. Topologically, residues 98 to 117 are cytoplasmic; the sequence is GMRKENRWGIRGALVFGGGT. Residues 118 to 140 form a helical membrane-spanning segment; sequence LAFHTLLFGIGIVCSILLIFLIF. The Periplasmic portion of the chain corresponds to 141-149; that stretch reads SFLTGGSLV.

It localises to the cell inner membrane. This Escherichia coli (strain K12) protein is Inner membrane protein YidI (yidI).